Here is a 178-residue protein sequence, read N- to C-terminus: MCTSGQIIGSLLVLSVLEIGLGVSSVAVGAVSFSLALREHKPQLGDSSPVWSGVCFLLCGICGILCAKKKSGLVMILFSACCICGLIGGILNFQFLRAVTKKTSSLYPLHLASMSLACIGIGGCTLSSWLTCRLASYEQRRMFSEREHSLHHSHEMAEKEITDNMSNGGPQLIFNGRV.

Transmembrane regions (helical) follow at residues 11 to 31 (LLVL…VGAV), 47 to 67 (SSPV…ILCA), 73 to 93 (LVMI…ILNF), and 106 to 126 (LYPL…GCTL).

In terms of tissue distribution, expression is significantly decreased in lung cancer cells compared to normal lung tissue (at protein level).

The protein resides in the cytoplasm. It is found in the membrane. Functionally, acts as a tumor suppressor in lung cancer. Inhibits tumor cell growth by inhibiting cell proliferation and migration and promoting cell apoptosis. Inhibits metastasis of lung cancer by suppressing beta-catenin expression in the Wnt/beta-catenin signaling pathway. The chain is Transmembrane protein 196 (TMEM196) from Homo sapiens (Human).